Reading from the N-terminus, the 338-residue chain is Large ribosomal subunit protein uL3 (338 aa).

The interval 1 to 37 (MPQPSRPRKGSMGFSPRKRAESEVPRIRSWASNDGAP) is disordered.

The protein belongs to the universal ribosomal protein uL3 family. In terms of assembly, part of the 50S ribosomal subunit. Forms a cluster with proteins L14 and L24e.

Functionally, one of the primary rRNA binding proteins, it binds directly near the 3'-end of the 23S rRNA, where it nucleates assembly of the 50S subunit. This chain is Large ribosomal subunit protein uL3, found in Haloquadratum walsbyi (strain DSM 16790 / HBSQ001).